The primary structure comprises 164 residues: Phosphopantetheine adenylyltransferase (164 aa).

Thr-10 lines the substrate pocket. Residues 10–11 and His-18 contribute to the ATP site; that span reads TF. Residues Lys-42, Thr-79, and Arg-93 each coordinate substrate. ATP-binding positions include 94–96, Glu-104, and 129–135; these read GLR and NQIISSR.

This sequence belongs to the bacterial CoaD family. In terms of assembly, homohexamer. Requires Mg(2+) as cofactor.

The protein localises to the cytoplasm. It catalyses the reaction (R)-4'-phosphopantetheine + ATP + H(+) = 3'-dephospho-CoA + diphosphate. Its pathway is cofactor biosynthesis; coenzyme A biosynthesis; CoA from (R)-pantothenate: step 4/5. In terms of biological role, reversibly transfers an adenylyl group from ATP to 4'-phosphopantetheine, yielding dephospho-CoA (dPCoA) and pyrophosphate. The protein is Phosphopantetheine adenylyltransferase of Pelagibacter ubique (strain HTCC1062).